Reading from the N-terminus, the 448-residue chain is Probable ribonuclease FAU-1 (448 aa).

Positions 426-448 (EAPGGKICTSEGLTSALPQSSSA) are disordered. Residues 436–448 (EGLTSALPQSSSA) show a composition bias toward polar residues.

This sequence belongs to the FAU-1 family.

Its function is as follows. Probable RNase involved in rRNA stability through maturation and/or degradation of precursor rRNAs. Binds to RNA in loop regions with AU-rich sequences. The protein is Probable ribonuclease FAU-1 of Pyrobaculum islandicum (strain DSM 4184 / JCM 9189 / GEO3).